Consider the following 125-residue polypeptide: Histone H1-like protein HC1 (125 aa).

This sequence belongs to the histone H1/H5 family. HCT subfamily.

Functionally, might have a role analogous to that of eukaryotic histone proteins. The sequence is that of Histone H1-like protein HC1 (hctA) from Chlamydia muridarum (strain MoPn / Nigg).